The sequence spans 218 residues: LexA repressor (218 aa).

The H-T-H motif DNA-binding region spans 31 to 51 (IREIQDGLRISSTSVVAYNLR). Residues Ser-137 and Lys-176 each act as for autocatalytic cleavage activity in the active site.

It belongs to the peptidase S24 family. In terms of assembly, homodimer.

It carries out the reaction Hydrolysis of Ala-|-Gly bond in repressor LexA.. Its function is as follows. Represses a number of genes involved in the response to DNA damage (SOS response), including recA and lexA. In the presence of single-stranded DNA, RecA interacts with LexA causing an autocatalytic cleavage which disrupts the DNA-binding part of LexA, leading to derepression of the SOS regulon and eventually DNA repair. The polypeptide is LexA repressor (Roseiflexus sp. (strain RS-1)).